The following is a 203-amino-acid chain: Small ribosomal subunit protein uS4 (203 aa).

The S4 RNA-binding domain occupies 93 to 155 (RRLDSIVYRL…SKNLQQIRDA (63 aa)).

The protein belongs to the universal ribosomal protein uS4 family. As to quaternary structure, part of the 30S ribosomal subunit. Contacts protein S5. The interaction surface between S4 and S5 is involved in control of translational fidelity.

Its function is as follows. One of the primary rRNA binding proteins, it binds directly to 16S rRNA where it nucleates assembly of the body of the 30S subunit. With S5 and S12 plays an important role in translational accuracy. The sequence is that of Small ribosomal subunit protein uS4 from Lactobacillus acidophilus (strain ATCC 700396 / NCK56 / N2 / NCFM).